Reading from the N-terminus, the 738-residue chain is Catalase-peroxidase (738 aa).

The segment covering 1 to 13 has biased composition (gly residues); it reads MDGQDIGAGGGCP. The segment at 1-26 is disordered; sequence MDGQDIGAGGGCPFSGANTNKGRRSN. Residues 98–226 constitute a cross-link (tryptophyl-tyrosyl-methioninium (Trp-Tyr) (with M-252)); the sequence is WHSAGTYRTA…LAAVQMGLIY (129 aa). Residue His-99 is the Proton acceptor of the active site. Positions 226–252 form a cross-link, tryptophyl-tyrosyl-methioninium (Tyr-Met) (with W-98); sequence YVNPEGPDGNPDPIASGRDIRETFARM. His-267 serves as a coordination point for heme b.

The protein belongs to the peroxidase family. Peroxidase/catalase subfamily. Homodimer or homotetramer. Heme b serves as cofactor. In terms of processing, formation of the three residue Trp-Tyr-Met cross-link is important for the catalase, but not the peroxidase activity of the enzyme.

The enzyme catalyses H2O2 + AH2 = A + 2 H2O. The catalysed reaction is 2 H2O2 = O2 + 2 H2O. Functionally, bifunctional enzyme with both catalase and broad-spectrum peroxidase activity. The chain is Catalase-peroxidase from Ruegeria sp. (strain TM1040) (Silicibacter sp.).